The chain runs to 347 residues: S-adenosylmethionine:tRNA ribosyltransferase-isomerase (347 aa).

This sequence belongs to the QueA family. In terms of assembly, monomer.

Its subcellular location is the cytoplasm. The catalysed reaction is 7-aminomethyl-7-carbaguanosine(34) in tRNA + S-adenosyl-L-methionine = epoxyqueuosine(34) in tRNA + adenine + L-methionine + 2 H(+). It participates in tRNA modification; tRNA-queuosine biosynthesis. In terms of biological role, transfers and isomerizes the ribose moiety from AdoMet to the 7-aminomethyl group of 7-deazaguanine (preQ1-tRNA) to give epoxyqueuosine (oQ-tRNA). This Streptococcus thermophilus (strain CNRZ 1066) protein is S-adenosylmethionine:tRNA ribosyltransferase-isomerase.